An 855-amino-acid chain; its full sequence is MNESFDKDFSNHTPMMQQYLKLKAQHPEILLFYRMGDFYELFYDDAKRASQLLDISLTKRGASAGEPIPMAGIPHHAVENYLAKLVNQGESVAICEQIGDPATSKGPVERKVVRIVTPGTISDEALLQERQDNLLAAIWQDGKGYGYATLDISSGRFRLSEPADRETMAAELQRTNPAELLYAEDFAEMALIEGRRGLRRRPLWEFEIDTARQQLNLQFGTRDLVGFGVENASRGLCAAGCLLQYVKDTQRTSLPHIRSITMERQQDSIIMDAATRRNLEITQNLAGGVENTLAAVLDCTVTPMGSRMLKRWLHMPVRNTDILRERQQTIGALQDTVSELQPVLRQVGDLERILARLALRTARPRDLARMRHAFQQLPELHAQLETVDSAPVQALRKKMGDFAEPRDLLERAIIDAPPVLVRDGGVIAPGYHEELDEWRALADGATDYLDRLEIRERERTGLDTLKVGYNAVHGYYIQISRGQSHLAPINYVRRQTLKNAERYIIPELKEYEDKVLTSKGKALALEKQLYDELFDLLLPHLADLQQSANALAELDVLVNLAERAWTLNYTCPTFTDKPGIRITEGRHPVVEQVLNEPFIANPLNLSPQRRMLIITGPNMGGKSTYMRQTALIALLAYIGSYVPAQNVEIGPIDRIFTRVGAADDLASGRSTFMVEMTETANILHNATENSLVLMDEIGRGTSTYDGLSLAWACAENLANKIKALTLFATHYFELTQLPEKMEGVANVHLDALEHGDTIAFMHSVQDGAASKSYGLAVAALAGVPKEVIKRARQKLRELESISPNAAATQVDGTQMSLLAAPEETSPAVEALENLDPDSLTPRQALEWIYRLKSLV.

616–623 (GPNMGGKS) contributes to the ATP binding site.

The protein belongs to the DNA mismatch repair MutS family.

Functionally, this protein is involved in the repair of mismatches in DNA. It is possible that it carries out the mismatch recognition step. This protein has a weak ATPase activity. This is DNA mismatch repair protein MutS from Salmonella paratyphi C (strain RKS4594).